Here is a 570-residue protein sequence, read N- to C-terminus: Probable metalloreductase AIM14 (570 aa).

7 consecutive transmembrane segments (helical) span residues 21–41, 70–90, 101–118, 142–162, 177–197, 204–224, and 230–250; these read IKYG…LALL, AIHL…HYSL, LGRL…LTLR, IITV…AIDD, FVGF…IGPM, LFYI…PIHS, and FPFL…RIVF. In terms of domain architecture, Ferric oxidoreductase spans 101 to 219; it reads LGRLSYALIP…NLVNVAFILL (119 aa). In terms of domain architecture, FAD-binding FR-type spans 250–388; that stretch reads FAKSLMILNK…GGSGISFALP (139 aa). Over residues 481–505 the composition is skewed to polar residues; sequence SNFNSENADSNDNTPETSHSPTKEN. A disordered region spans residues 481–507; the sequence is SNFNSENADSNDNTPETSHSPTKENGS.

This sequence belongs to the ferric reductase (FRE) family. AIM14 subfamily. As to quaternary structure, interacts with ribosomes.

The protein localises to the membrane. In terms of biological role, probable cell surface metalloreductase. May be involved in iron or copper homeostasis. This chain is Probable metalloreductase AIM14 (AIM14), found in Saccharomyces cerevisiae (strain YJM789) (Baker's yeast).